The primary structure comprises 377 residues: Ejaculatory bulb-specific protein 1 (377 aa).

A signal peptide spans M1 to A20. The segment at P155–G253 is disordered. The span at G165–P228 shows a compositional bias: pro residues.

As to expression, specifically expressed in the ejaculatory bulb and seminal fluid. Detected in mated females 3 minutes after the start of mating, and for at least 3 hours after the start of mating.

Its subcellular location is the secreted. Major protein component of the posterior mating plug. Accessory gland proteins constitute, or are required for formation of the anterior mating plug. Posterior mating plug forms before sperm transfer and the anterior mating plug is formed after the start of mating. The chain is Ejaculatory bulb-specific protein 1 from Drosophila melanogaster (Fruit fly).